The primary structure comprises 463 residues: Ammonium transporter 1 (463 aa).

Over M1–N39 the chain is Extracellular. A helical membrane pass occupies residues T40–F60. Residues E61–Q76 are Cytoplasmic-facing. Residues I77–F97 form a helical membrane-spanning segment. Residues G98–N127 are Extracellular-facing. A helical membrane pass occupies residues I128–M148. Over T149–A160 the chain is Cytoplasmic. The chain crosses the membrane as a helical span at residues F161–W181. Topologically, residues G182–D194 are extracellular. Residues F195–Y215 traverse the membrane as a helical segment. At V216–N233 the chain is on the cytoplasmic side. A helical transmembrane segment spans residues L234–G254. The Extracellular segment spans residues S255–S265. The helical transmembrane segment at A266–A286 threads the bilayer. Over A287 to T293 the chain is Cytoplasmic. The helical transmembrane segment at V294–I314 threads the bilayer. At N315–S316 the chain is on the extracellular side. The helical transmembrane segment at Q317 to L337 threads the bilayer. At K338–S351 the chain is on the cytoplasmic side. The helical transmembrane segment at V352–V372 threads the bilayer. The Extracellular portion of the chain corresponds to N373–L392. Residues L393–I413 form a helical membrane-spanning segment. Residues D414 to K463 lie on the Cytoplasmic side of the membrane.

This sequence belongs to the ammonia transporter channel (TC 1.A.11.2) family.

It localises to the cell membrane. The protein resides in the endosome membrane. Its subcellular location is the lysosome membrane. It is found in the cytoplasmic vesicle. The protein localises to the phagosome membrane. Functionally, ammonium transporter that mediates the excretion of ammonium. Controls ammonium homeostasis during growth and development. Ammonium has been shown to function as a morphogen at multiple steps during the development. This Dictyostelium discoideum (Social amoeba) protein is Ammonium transporter 1 (amtA).